The primary structure comprises 332 residues: Protein phosphatase PTC7 homolog fig (332 aa).

The PPM-type phosphatase domain maps to 70–325; that stretch reads KPCSPRERAN…DDITLILASV (256 aa). Positions 102, 103, and 247 each coordinate Mn(2+).

It belongs to the PP2C family. It depends on Mg(2+) as a cofactor. Mn(2+) serves as cofactor.

The enzyme catalyses O-phospho-L-seryl-[protein] + H2O = L-seryl-[protein] + phosphate. The catalysed reaction is O-phospho-L-threonyl-[protein] + H2O = L-threonyl-[protein] + phosphate. The chain is Protein phosphatase PTC7 homolog fig from Drosophila ananassae (Fruit fly).